A 320-amino-acid chain; its full sequence is GDSL esterase/lipase At3g43570 (320 aa).

The signal sequence occupies residues methionine 1–alanine 19. An N-linked (GlcNAc...) asparagine glycan is attached at asparagine 25. Residue serine 37 is the Nucleophile of the active site. Asparagine 287 carries N-linked (GlcNAc...) asparagine glycosylation. Catalysis depends on residues aspartate 295 and histidine 298.

The protein belongs to the 'GDSL' lipolytic enzyme family.

The protein resides in the secreted. The protein is GDSL esterase/lipase At3g43570 of Arabidopsis thaliana (Mouse-ear cress).